The following is a 255-amino-acid chain: tRNA (guanine-N(1)-)-methyltransferase (255 aa).

S-adenosyl-L-methionine is bound by residues glycine 121 and isoleucine 141–leucine 146. The interval proline 236–glycine 255 is disordered. The span at glycine 244–glycine 255 shows a compositional bias: basic residues.

Belongs to the RNA methyltransferase TrmD family. In terms of assembly, homodimer.

It is found in the cytoplasm. The catalysed reaction is guanosine(37) in tRNA + S-adenosyl-L-methionine = N(1)-methylguanosine(37) in tRNA + S-adenosyl-L-homocysteine + H(+). In terms of biological role, specifically methylates guanosine-37 in various tRNAs. This is tRNA (guanine-N(1)-)-methyltransferase from Bradyrhizobium diazoefficiens (strain JCM 10833 / BCRC 13528 / IAM 13628 / NBRC 14792 / USDA 110).